Here is a 163-residue protein sequence, read N- to C-terminus: NADH-quinone oxidoreductase subunit I (163 aa).

2 consecutive 4Fe-4S ferredoxin-type domains span residues 53–83 and 94–123; these read LRRY…IEAG and TRYD…EGPN. The [4Fe-4S] cluster site is built by Cys63, Cys66, Cys69, Cys73, Cys103, Cys106, Cys109, and Cys113.

Belongs to the complex I 23 kDa subunit family. As to quaternary structure, NDH-1 is composed of 14 different subunits. Subunits NuoA, H, J, K, L, M, N constitute the membrane sector of the complex. The cofactor is [4Fe-4S] cluster.

The protein localises to the cell inner membrane. The enzyme catalyses a quinone + NADH + 5 H(+)(in) = a quinol + NAD(+) + 4 H(+)(out). In terms of biological role, NDH-1 shuttles electrons from NADH, via FMN and iron-sulfur (Fe-S) centers, to quinones in the respiratory chain. The immediate electron acceptor for the enzyme in this species is believed to be ubiquinone. Couples the redox reaction to proton translocation (for every two electrons transferred, four hydrogen ions are translocated across the cytoplasmic membrane), and thus conserves the redox energy in a proton gradient. In Parvibaculum lavamentivorans (strain DS-1 / DSM 13023 / NCIMB 13966), this protein is NADH-quinone oxidoreductase subunit I.